We begin with the raw amino-acid sequence, 328 residues long: tRNA uridine(34) hydroxylase (328 aa).

One can recognise a Rhodanese domain in the interval 130–224 (LDEDTIVLDT…YGKDPEVQGE (95 aa)). Residue C184 is the Cysteine persulfide intermediate of the active site.

This sequence belongs to the TrhO family.

The enzyme catalyses uridine(34) in tRNA + AH2 + O2 = 5-hydroxyuridine(34) in tRNA + A + H2O. In terms of biological role, catalyzes oxygen-dependent 5-hydroxyuridine (ho5U) modification at position 34 in tRNAs. This Streptococcus uberis (strain ATCC BAA-854 / 0140J) protein is tRNA uridine(34) hydroxylase.